Consider the following 236-residue polypeptide: Terpene cyclase andB (236 aa).

The next 7 helical transmembrane spans lie at 13–33, 45–65, 70–90, 106–126, 135–155, 166–186, and 200–220; these read TVVN…YILM, MSML…ILCP, VVRP…YAAI, HLPL…IALI, FLWS…FQLL, VLWL…TLMW, and LTAY…VVFY.

The protein belongs to the paxB family.

It localises to the membrane. The protein operates within secondary metabolite biosynthesis; terpenoid biosynthesis. In terms of biological role, terpene cyclase; part of the gene cluster that mediates the biosynthesis of anditomin, a fungal meroterpenoid. The first step of the pathway is the synthesis of 3,5-dimethylorsellinic acid (DMOA) by the polyketide synthase andM. DMOA is then converted to the phthalide compound 5,7-dihydroxy-4,6-dimethylphthalide (DHDMP) by the cytochrome P450 monooxygenase andK, which is further prenylated by the prenyltransferase andD to yield farnesyl-DHDMP. Further epoxidation by the FAD-dependent monooxygenase andE leads to epoxyfarnesyl-DHDMP. The next step involves the terpene cyclase andB that converts epoxyfarnesyl-DHDMP into preandiloid A through opening of the epoxide ring followed by the cyclization of the farnesyl moiety. Preandiloid A is in turn oxidized at the C-3 hydroxyl group to yield preandiloid B by the dehydrogenase andC. The dioxygenase andA is solely responsible for the dehydrogenation of preandiloid B leading to the enone preandiloid C, as well as for the intriguing structural rearrangement to generate the bicyclo[2.2.2]octane core, transforming preandiloid C into andiconin. FAD-binding monooxygenase andJ then produces andilesin D which is reduced by dehydrogenase andI to yield andilesin A. Action of acetyltransferase andG followed by a spontaneous acetate elimination leads then to andilesin B, which is in turn substrate of the short chain dehydrogenase andH to yield andilesin C. Finally, the dioxygenase andF catalyzes the transformation of andilesin C to anditomin. This is Terpene cyclase andB from Emericella variicolor (Aspergillus stellatus).